We begin with the raw amino-acid sequence, 541 residues long: Probable malate:quinone oxidoreductase (541 aa).

A disordered region spans residues 520-541 (AKPAAGAAQQAKPAKATADIAL).

The protein belongs to the MQO family. It depends on FAD as a cofactor.

The catalysed reaction is (S)-malate + a quinone = a quinol + oxaloacetate. It participates in carbohydrate metabolism; tricarboxylic acid cycle; oxaloacetate from (S)-malate (quinone route): step 1/1. The chain is Probable malate:quinone oxidoreductase from Ralstonia nicotianae (strain ATCC BAA-1114 / GMI1000) (Ralstonia solanacearum).